The primary structure comprises 705 residues: UvrABC system protein C (705 aa).

One can recognise a GIY-YIG domain in the interval 16–95; the sequence is ETPGVYRFRD…IKQFDPRFNV (80 aa). The UVR domain maps to 208 to 243; that stretch reads GRYLRRLEREMQQAAQAQEYERAARLRDDIGALRRA. Positions 315 to 332 are enriched in low complexity; the sequence is AASTGTAGSTVPTTTAGS. Disordered regions lie at residues 315–335 and 683–705; these read AAST…SQGE and RADA…ETVS.

This sequence belongs to the UvrC family. As to quaternary structure, interacts with UvrB in an incision complex.

It localises to the cytoplasm. In terms of biological role, the UvrABC repair system catalyzes the recognition and processing of DNA lesions. UvrC both incises the 5' and 3' sides of the lesion. The N-terminal half is responsible for the 3' incision and the C-terminal half is responsible for the 5' incision. This Frankia casuarinae (strain DSM 45818 / CECT 9043 / HFP020203 / CcI3) protein is UvrABC system protein C.